Reading from the N-terminus, the 258-residue chain is MIIDFKKYSSVRIGNEFEVLVLDQICDFDGFLIGGANNLLISPKPKNIGILGDGFDFMQILDQNKDFIHLRIGCKTKSSKIYRFAKENNLKGFEYLSKIPGTLGGLLKMNAGLKGECISQNLIKIATSQGEILRENINFDYRFCPLNMPFFWAEFKLNFGFDTLKDEALKNARSNQPSGASFGSIFKNPKNDFAGRLIEAVGLKGFSKGDAMLSDKHANFLINKKNASFEDAFFLIELARKKVFEEFGINLENEVIII.

Residue Arg-142 is part of the active site. Ser-184 functions as the Proton donor in the catalytic mechanism. Residue Glu-254 is part of the active site.

This sequence belongs to the MurB family. Requires FAD as cofactor.

The protein resides in the cytoplasm. It carries out the reaction UDP-N-acetyl-alpha-D-muramate + NADP(+) = UDP-N-acetyl-3-O-(1-carboxyvinyl)-alpha-D-glucosamine + NADPH + H(+). Its pathway is cell wall biogenesis; peptidoglycan biosynthesis. Functionally, cell wall formation. The polypeptide is UDP-N-acetylenolpyruvoylglucosamine reductase (Campylobacter jejuni (strain RM1221)).